The primary structure comprises 205 residues: ATP phosphoribosyltransferase (205 aa).

This sequence belongs to the ATP phosphoribosyltransferase family. Short subfamily. Heteromultimer composed of HisG and HisZ subunits.

It is found in the cytoplasm. It catalyses the reaction 1-(5-phospho-beta-D-ribosyl)-ATP + diphosphate = 5-phospho-alpha-D-ribose 1-diphosphate + ATP. Its pathway is amino-acid biosynthesis; L-histidine biosynthesis; L-histidine from 5-phospho-alpha-D-ribose 1-diphosphate: step 1/9. In terms of biological role, catalyzes the condensation of ATP and 5-phosphoribose 1-diphosphate to form N'-(5'-phosphoribosyl)-ATP (PR-ATP). Has a crucial role in the pathway because the rate of histidine biosynthesis seems to be controlled primarily by regulation of HisG enzymatic activity. This is ATP phosphoribosyltransferase from Helicobacter hepaticus (strain ATCC 51449 / 3B1).